The primary structure comprises 329 residues: Biotin synthase (329 aa).

The Radical SAM core domain occupies 48-278 (FVGDKVYLCS…SKKISVCGGR (231 aa)). [4Fe-4S] cluster is bound by residues C66, C70, and C73. [2Fe-2S] cluster-binding residues include S143 and C203.

The protein belongs to the radical SAM superfamily. Biotin synthase family. Homodimer. It depends on [4Fe-4S] cluster as a cofactor. Requires [2Fe-2S] cluster as cofactor.

It catalyses the reaction (4R,5S)-dethiobiotin + (sulfur carrier)-SH + 2 reduced [2Fe-2S]-[ferredoxin] + 2 S-adenosyl-L-methionine = (sulfur carrier)-H + biotin + 2 5'-deoxyadenosine + 2 L-methionine + 2 oxidized [2Fe-2S]-[ferredoxin]. It functions in the pathway cofactor biosynthesis; biotin biosynthesis; biotin from 7,8-diaminononanoate: step 2/2. Its function is as follows. Catalyzes the conversion of dethiobiotin (DTB) to biotin by the insertion of a sulfur atom into dethiobiotin via a radical-based mechanism. In Geotalea uraniireducens (strain Rf4) (Geobacter uraniireducens), this protein is Biotin synthase.